The sequence spans 232 residues: uncharacterized protein (232 aa).

The tract at residues 1 to 46 (MNAHNMRGPPGDLAKVVPGSRSGWNEGSRCRQADKGDGQCRNGGRD) is disordered. A compositionally biased stretch (basic and acidic residues) spans 28 to 46 (SRCRQADKGDGQCRNGGRD).

This is an uncharacterized protein from Rhizobium meliloti (Ensifer meliloti).